Consider the following 968-residue polypeptide: Glycine dehydrogenase (decarboxylating) (968 aa).

Lys712 bears the N6-(pyridoxal phosphate)lysine mark.

Belongs to the GcvP family. In terms of assembly, the glycine cleavage system is composed of four proteins: P, T, L and H. Pyridoxal 5'-phosphate is required as a cofactor.

It carries out the reaction N(6)-[(R)-lipoyl]-L-lysyl-[glycine-cleavage complex H protein] + glycine + H(+) = N(6)-[(R)-S(8)-aminomethyldihydrolipoyl]-L-lysyl-[glycine-cleavage complex H protein] + CO2. Its function is as follows. The glycine cleavage system catalyzes the degradation of glycine. The P protein binds the alpha-amino group of glycine through its pyridoxal phosphate cofactor; CO(2) is released and the remaining methylamine moiety is then transferred to the lipoamide cofactor of the H protein. The protein is Glycine dehydrogenase (decarboxylating) of Prochlorococcus marinus (strain NATL2A).